A 161-amino-acid polypeptide reads, in one-letter code: Allophycocyanin subunit alpha 1 (161 aa).

An N4-methylasparagine modification is found at Asn71. Residue Cys81 coordinates (2R,3E)-phycocyanobilin.

It belongs to the phycobiliprotein family. Heterohexamer of two alpha chains, one alpha-B chain and three beta chains. Contains one covalently linked phycocyanobilin chromophore. The chromophore is added by phycocyanobilin lyase CpcS 1.

It localises to the cellular thylakoid membrane. In terms of biological role, light-harvesting photosynthetic bile pigment-protein from the phycobiliprotein complex. Allophycocyanin has a maximum absorption at approximately 650 to 653 nanometers. This is Allophycocyanin subunit alpha 1 (apcA1) from Nostoc sp. (strain PCC 7120 / SAG 25.82 / UTEX 2576).